A 108-amino-acid polypeptide reads, in one-letter code: Urease subunit gamma (108 aa).

This sequence belongs to the urease gamma subunit family. As to quaternary structure, heterotrimer of UreA (gamma), UreB (beta) and UreC (alpha) subunits. Three heterotrimers associate to form the active enzyme.

The protein localises to the cytoplasm. It catalyses the reaction urea + 2 H2O + H(+) = hydrogencarbonate + 2 NH4(+). The protein operates within nitrogen metabolism; urea degradation; CO(2) and NH(3) from urea (urease route): step 1/1. This Trichodesmium erythraeum (strain IMS101) protein is Urease subunit gamma.